A 130-amino-acid chain; its full sequence is Small ribosomal subunit protein uS9 (130 aa).

It belongs to the universal ribosomal protein uS9 family.

This chain is Small ribosomal subunit protein uS9, found in Burkholderia thailandensis (strain ATCC 700388 / DSM 13276 / CCUG 48851 / CIP 106301 / E264).